A 619-amino-acid chain; its full sequence is Chaperone protein HscA homolog (619 aa).

This sequence belongs to the heat shock protein 70 family.

Functionally, chaperone involved in the maturation of iron-sulfur cluster-containing proteins. Has a low intrinsic ATPase activity which is markedly stimulated by HscB. The sequence is that of Chaperone protein HscA homolog from Haemophilus influenzae (strain 86-028NP).